The primary structure comprises 487 residues: NADH-quinone oxidoreductase subunit N (487 aa).

14 consecutive transmembrane segments (helical) span residues 8-28 (LLAL…MLAI), 37-57 (AFVV…IVMA), 71-91 (GYAV…CTFG), 104-124 (EFYL…GSRH), 125-145 (LASL…LVGY), 159-179 (YMVL…LLYA), 203-223 (LMGG…LAPF), 235-255 (PAPV…CVLL), 269-289 (IHWL…LLAL), 303-323 (ISHF…QMPV), 327-347 (GVYL…ISMM), 374-394 (AVLT…GFIG), 408-427 (WWLS…YYLR), and 449-469 (AITS…ALGL).

Belongs to the complex I subunit 2 family. As to quaternary structure, NDH-1 is composed of 14 different subunits. Subunits NuoA, H, J, K, L, M, N constitute the membrane sector of the complex.

The protein resides in the cell inner membrane. It carries out the reaction a quinone + NADH + 5 H(+)(in) = a quinol + NAD(+) + 4 H(+)(out). In terms of biological role, NDH-1 shuttles electrons from NADH, via FMN and iron-sulfur (Fe-S) centers, to quinones in the respiratory chain. The immediate electron acceptor for the enzyme in this species is believed to be ubiquinone. Couples the redox reaction to proton translocation (for every two electrons transferred, four hydrogen ions are translocated across the cytoplasmic membrane), and thus conserves the redox energy in a proton gradient. The chain is NADH-quinone oxidoreductase subunit N from Aeromonas hydrophila subsp. hydrophila (strain ATCC 7966 / DSM 30187 / BCRC 13018 / CCUG 14551 / JCM 1027 / KCTC 2358 / NCIMB 9240 / NCTC 8049).